A 262-amino-acid chain; its full sequence is Small ribosomal subunit protein eS1 (262 aa).

It belongs to the eukaryotic ribosomal protein eS1 family. As to quaternary structure, component of the small ribosomal subunit. Mature ribosomes consist of a small (40S) and a large (60S) subunit. The 40S subunit contains about 33 different proteins and 1 molecule of RNA (18S). The 60S subunit contains about 49 different proteins and 3 molecules of RNA (25S, 5.8S and 5S).

Its subcellular location is the cytoplasm. The sequence is that of Small ribosomal subunit protein eS1 from Theileria parva (East coast fever infection agent).